The following is a 299-amino-acid chain: Protease HtpX homolog (299 aa).

2 helical membrane passes run 7–24 and 29–46; these read GILMAVMTALFLGVGALI and GAIIALIVAALMNLFTFW. His130 contributes to the Zn(2+) binding site. Residue Glu131 is part of the active site. His134 is a Zn(2+) binding site. A run of 2 helical transmembrane segments spans residues 145–165 and 174–194; these read VTATFAGAISMLANFAFFFGG and PVGIVGTLALMILAPLAAGLV. Position 203 (Glu203) interacts with Zn(2+).

It belongs to the peptidase M48B family. Requires Zn(2+) as cofactor.

It is found in the cell inner membrane. This chain is Protease HtpX homolog, found in Cereibacter sphaeroides (strain ATCC 17025 / ATH 2.4.3) (Rhodobacter sphaeroides).